The sequence spans 324 residues: GTP cyclohydrolase 1 (324 aa).

2 disordered regions span residues 33–59 (GRNN…NQAE) and 79–119 (VPLA…TPGH). Low complexity predominate over residues 40 to 49 (STSSTSGTSS). 2 stretches are compositionally biased toward polar residues: residues 50 to 59 (LADRQQNQAE) and 93 to 117 (TNGS…STTP). Residues Cys214, His217, and Cys285 each contribute to the Zn(2+) site.

The protein belongs to the GTP cyclohydrolase I family. As to quaternary structure, toroid-shaped homodecamer, composed of two pentamers of five dimers. Isoform B is expressed almost exclusively in adult heads.

It carries out the reaction GTP + H2O = 7,8-dihydroneopterin 3'-triphosphate + formate + H(+). Its pathway is cofactor biosynthesis; 7,8-dihydroneopterin triphosphate biosynthesis; 7,8-dihydroneopterin triphosphate from GTP: step 1/1. Its function is as follows. Isoform B is required for eye pigment production, Isoform C may be required for normal embryonic development and segment pattern formation. The sequence is that of GTP cyclohydrolase 1 (Pu) from Drosophila melanogaster (Fruit fly).